Here is a 396-residue protein sequence, read N- to C-terminus: L-lactate dehydrogenase (396 aa).

The region spanning methionine 1–glycine 380 is the FMN hydroxy acid dehydrogenase domain. Tyrosine 24 is a substrate binding site. 2 residues coordinate FMN: serine 106 and glutamine 127. Tyrosine 129 provides a ligand contact to substrate. An FMN-binding site is contributed by threonine 155. Residue arginine 164 participates in substrate binding. An FMN-binding site is contributed by lysine 251. The active-site Proton acceptor is histidine 275. Arginine 278 is a substrate binding site. FMN is bound at residue aspartate 306–arginine 330.

Belongs to the FMN-dependent alpha-hydroxy acid dehydrogenase family. It depends on FMN as a cofactor.

The protein localises to the cell inner membrane. The enzyme catalyses (S)-lactate + A = pyruvate + AH2. Functionally, catalyzes the conversion of L-lactate to pyruvate. Is coupled to the respiratory chain. The polypeptide is L-lactate dehydrogenase (Citrobacter koseri (strain ATCC BAA-895 / CDC 4225-83 / SGSC4696)).